We begin with the raw amino-acid sequence, 210 residues long: DNA-directed RNA polymerase III subunit rpc31 (210 aa).

Position 103 is a phosphoserine (S103). Residues 151-210 are disordered; that stretch reads KDESSEAAHPNIEEEPDEGLEEEDEDFGDDDDNDYGENYFDNGEGDDYDDYDGDEGAIYE. 2 stretches are compositionally biased toward acidic residues: residues 163-185 and 193-210; these read EEEPDEGLEEEDEDFGDDDDNDY and GEGDDYDDYDGDEGAIYE.

The protein belongs to the eukaryotic RPC7 RNA polymerase subunit family. Component of the RNA polymerase III (Pol III) complex.

It is found in the cytoplasm. The protein localises to the nucleus. Its function is as follows. DNA-dependent RNA polymerase catalyzes the transcription of DNA into RNA using the four ribonucleoside triphosphates as substrates. Specific peripheric component of RNA polymerase III which synthesizes small RNAs, such as 5S rRNA and tRNAs. The protein is DNA-directed RNA polymerase III subunit rpc31 (rpc31) of Schizosaccharomyces pombe (strain 972 / ATCC 24843) (Fission yeast).